The sequence spans 137 residues: Proofreading thioesterase EntH (137 aa).

The active-site Nucleophile or proton acceptor is glutamate 63.

The protein belongs to the thioesterase PaaI family. Homotetramer. Dimer of dimers. Interacts specifically with the aryl carrier protein (ArCP) domain of EntB.

It is found in the cytoplasm. The protein operates within siderophore biosynthesis; enterobactin biosynthesis. Functionally, required for optimal enterobactin synthesis. Acts as a proofreading enzyme that prevents EntB misacylation by hydrolyzing the thioester bound existing between EntB and wrongly charged molecules. In Escherichia coli O6:H1 (strain CFT073 / ATCC 700928 / UPEC), this protein is Proofreading thioesterase EntH.